The primary structure comprises 362 residues: GTPase Obg (362 aa).

Residues 1-159 form the Obg domain; sequence MKFLDEAKVY…KTIWLRLKLI (159 aa). Residues 160-327 enclose the OBG-type G domain; the sequence is ADAGLVGLPN…VLRALRDVIV (168 aa). Residues 166–173, 191–195, 212–215, 279–282, and 308–310 contribute to the GTP site; these read GLPNAGKS, FTTLH, DIPG, SQID, and SAV. Residues S173 and T193 each contribute to the Mg(2+) site. The interval 332–362 is disordered; the sequence is EEKPAKVPKLRHRDMIVSDEGEGEDGADDQP. The segment covering 348–362 has biased composition (acidic residues); sequence VSDEGEGEDGADDQP.

This sequence belongs to the TRAFAC class OBG-HflX-like GTPase superfamily. OBG GTPase family. Monomer. Mg(2+) is required as a cofactor.

The protein localises to the cytoplasm. Functionally, an essential GTPase which binds GTP, GDP and possibly (p)ppGpp with moderate affinity, with high nucleotide exchange rates and a fairly low GTP hydrolysis rate. Plays a role in control of the cell cycle, stress response, ribosome biogenesis and in those bacteria that undergo differentiation, in morphogenesis control. This Rhizobium etli (strain CIAT 652) protein is GTPase Obg.